A 312-amino-acid polypeptide reads, in one-letter code: Phosphoribosylglycinamide formyltransferase, chloroplastic (312 aa).

A chloroplast-targeting transit peptide spans Met1–Trp73. Gly109 to Asn111 contributes to the N(1)-(5-phospho-beta-D-ribosyl)glycinamide binding site. Residues Lys162, Leu187–Ile190, and Asn204 contribute to the (6R)-10-formyltetrahydrofolate site. His206 functions as the Proton donor in the catalytic mechanism. Residue Asp247 coordinates (6R)-10-formyltetrahydrofolate. Glu276 lines the N(1)-(5-phospho-beta-D-ribosyl)glycinamide pocket.

It belongs to the GART family.

Its subcellular location is the plastid. It is found in the chloroplast. It catalyses the reaction N(1)-(5-phospho-beta-D-ribosyl)glycinamide + (6R)-10-formyltetrahydrofolate = N(2)-formyl-N(1)-(5-phospho-beta-D-ribosyl)glycinamide + (6S)-5,6,7,8-tetrahydrofolate + H(+). It participates in purine metabolism; IMP biosynthesis via de novo pathway; N(2)-formyl-N(1)-(5-phospho-D-ribosyl)glycinamide from N(1)-(5-phospho-D-ribosyl)glycinamide (10-formyl THF route): step 1/1. The protein is Phosphoribosylglycinamide formyltransferase, chloroplastic (PUR3) of Vigna unguiculata (Cowpea).